Here is a 231-residue protein sequence, read N- to C-terminus: Orotidine 5'-phosphate decarboxylase (231 aa).

Residues aspartate 11, lysine 33, 60–69 (DLKFHDIPNT), threonine 119, arginine 180, glutamine 189, glycine 209, and arginine 210 contribute to the substrate site. Lysine 62 acts as the Proton donor in catalysis.

The protein belongs to the OMP decarboxylase family. Type 1 subfamily. In terms of assembly, homodimer.

The catalysed reaction is orotidine 5'-phosphate + H(+) = UMP + CO2. It functions in the pathway pyrimidine metabolism; UMP biosynthesis via de novo pathway; UMP from orotate: step 2/2. Its function is as follows. Catalyzes the decarboxylation of orotidine 5'-monophosphate (OMP) to uridine 5'-monophosphate (UMP). In Idiomarina loihiensis (strain ATCC BAA-735 / DSM 15497 / L2-TR), this protein is Orotidine 5'-phosphate decarboxylase.